Here is a 733-residue protein sequence, read N- to C-terminus: Zinc finger protein indra (733 aa).

The region spanning 17-91 (VRCDHCGTSQ…RETVDRVQEQ (75 aa)) is the ZAD domain. Zn(2+) is bound by residues Cys19, Cys22, Cys64, and Cys67. Positions 90 to 100 (EQPAKKTKVAE) are enriched in basic and acidic residues. Residues 90–121 (EQPAKKTKVAEIEEPSTQESDKKAVKVPKKNT) form a disordered region. Ser109, Ser153, and Ser176 each carry phosphoserine. Phosphothreonine occurs at positions 180 and 188. 2 C2H2-type zinc fingers span residues 228–251 (FQCP…QKEH) and 259–282 (YPCT…RDTH). A compositionally biased stretch (basic and acidic residues) spans 285 to 316 (TFESEAKTKAKESKEKEAKSGAKNKIDAKAKE). The segment at 285–336 (TFESEAKTKAKESKEKEAKSGAKNKIDAKAKETNAVSQRKKPKEKKSKEKKT) is disordered. C2H2-type zinc fingers lie at residues 416–439 (FQCE…KTVH) and 447–469 (FKCH…MTLH). 2 disordered regions span residues 499–525 (IENT…FTNR) and 540–622 (AFKT…SSDV). The segment covering 592 to 602 (SVSTTNGNSPA) has biased composition (polar residues). 3 positions are modified to phosphoserine: Ser600, Ser642, and Ser646. Thr647 is modified (phosphothreonine). C2H2-type zinc fingers lie at residues 653-676 (LSCD…EKKH) and 708-733 (LPCG…RKRH). Position 654 is a phosphoserine (Ser654).

Belongs to the krueppel C2H2-type zinc-finger protein family.

It localises to the nucleus. Its subcellular location is the nucleolus. Required for rDNA copy number maintenance and non-random sister chromatid segregation (NRSS) following unequal sister chromatid exchange. Binds ribosomal DNA (rDNA) preferentially binding to intergenic spacers (IGS) regions on both X and Y chromosomes. Essential for NRSS, a mechanism which contributes to the recovery and maintenance of inherently unstable rDNA copy numbers so that the integrity of the germline genome is upheld over generations and germline immortality is sustained. May be involved in transcriptional regulation. This is Zinc finger protein indra from Drosophila melanogaster (Fruit fly).